A 425-amino-acid chain; its full sequence is Gamma-glutamyl phosphate reductase (425 aa).

This sequence belongs to the gamma-glutamyl phosphate reductase family.

The protein resides in the cytoplasm. It catalyses the reaction L-glutamate 5-semialdehyde + phosphate + NADP(+) = L-glutamyl 5-phosphate + NADPH + H(+). Its pathway is amino-acid biosynthesis; L-proline biosynthesis; L-glutamate 5-semialdehyde from L-glutamate: step 2/2. Its function is as follows. Catalyzes the NADPH-dependent reduction of L-glutamate 5-phosphate into L-glutamate 5-semialdehyde and phosphate. The product spontaneously undergoes cyclization to form 1-pyrroline-5-carboxylate. This is Gamma-glutamyl phosphate reductase from Symbiobacterium thermophilum (strain DSM 24528 / JCM 14929 / IAM 14863 / T).